The chain runs to 148 residues: Hemoglobin subunit beta (148 aa).

Residues X3–H148 form the Globin domain. H64 and H93 together coordinate heme b.

Belongs to the globin family. As to quaternary structure, heterotetramer of two alpha chains and two beta chains. In terms of tissue distribution, red blood cells.

Its function is as follows. Involved in oxygen transport from gills to the various peripheral tissues. The polypeptide is Hemoglobin subunit beta (hbb) (Decapterus maruadsi (Japanese scad)).